The chain runs to 423 residues: Hydroxymethylglutaryl-CoA synthase-like protein AKT4-1 (423 aa).

The protein belongs to the thiolase-like superfamily. HMG-CoA synthase family.

It functions in the pathway mycotoxin biosynthesis. Hydroxymethylglutaryl-CoA synthase-like protein; part of the gene clusters that mediate the biosynthesis of the host-selective toxins (HSTs) AK-toxins responsible for Japanese pear black spot disease by the Japanese pear pathotype. AK-toxins are esters of 9,10-epoxy 8-hydroxy 9-methyldecatrienoic acid (EDA). On cellular level, AK-toxins affect plasma membrane of susceptible cells and cause a sudden increase in loss of K(+) after a few minutes of toxin treatment. The acyl-CoA ligase AKT1, the hydrolase AKT2 and enoyl-CoA hydratase AKT3 are all involved in the biosynthesis of the AK-, AF- and ACT-toxin common 9,10-epoxy-8-hydroxy-9-methyl-decatrienoic acid (EDA) structural moiety. Part of the EDA biosynthesis occurs in the peroxisome since these 3 enzymes are localized in peroxisomes. The exact roles of the 3 enzymes, as well as of additional AK-toxin clusters enzymes, including AKT4, AKT6 and AKTS1, have still to be elucidated. The Cytochrome P450 monooxygenase AKT7 on the other side functions to limit production of EDA and AK-toxin, probably via the catalysis of a side reaction of EDA or its precursor. This Alternaria alternata (Alternaria rot fungus) protein is Hydroxymethylglutaryl-CoA synthase-like protein AKT4-1.